A 147-amino-acid polypeptide reads, in one-letter code: MYFAIRLSFVLAVLICLTGNGSARMLDADRNRLQQLQIRSQQSADANTQVDIAYEVIGIYDKYKGQGGSNVLREAQLNSQVNDFKRKTMVIDGVPAQGGVWGILGAIKKAADAVPDNVKKDAENLVKSSTKVLVRGIYDYLMGKMKH.

Positions 1 to 23 (MYFAIRLSFVLAVLICLTGNGSA) are cleaved as a signal peptide.

Belongs to the Turandot family.

The protein resides in the secreted. In terms of biological role, a humoral factor that may play a role in stress tolerance. This is Protein Turandot Z from Drosophila melanogaster (Fruit fly).